The following is a 555-amino-acid chain: Solute carrier family 22 member 2 (555 aa).

Residues 1–21 (MSTVDDILEHIGEFHLFQKQT) are Cytoplasmic-facing. Residues 22-42 (FFLLALLSGAFTPIYVGIVFL) traverse the membrane as a helical segment. The Extracellular portion of the chain corresponds to 43–150 (GFTPDHHCWS…LVCAHSWMLD (108 aa)). The N-linked (GlcNAc...) asparagine glycan is linked to Asn71. A helical transmembrane segment spans residues 151–171 (LFQSVVNVGFFIGAMMIGYLA). Residues 172 to 177 (DRFGRK) are Cytoplasmic-facing. Residues 178-198 (FCLLVTILINAISGALMAISP) traverse the membrane as a helical segment. At 199–210 (NYAWMLVFRFLQ) the chain is on the extracellular side. The chain crosses the membrane as a helical span at residues 211–231 (GLVSKAGWLIGYILITEFVGL). Residues 232–238 (GYRRMVG) are Cytoplasmic-facing. A helical transmembrane segment spans residues 239 to 259 (ICYQIAFTVGLLILAGVAYVI). The Extracellular segment spans residues 260–263 (PNWR). A helical membrane pass occupies residues 264 to 284 (WLQFAVTLPNFCFLLYFWCIP). The Proline-rich sequence motif lies at 284-288 (PESPR). Over 285-348 (ESPRWLISQN…VRTPQIRKHT (64 aa)) the chain is Cytoplasmic. A helical transmembrane segment spans residues 349–369 (LILMYNWFTSSVLYQGLIMHM). Residues 370 to 375 (GLAGDN) are Extracellular-facing. Residues 376 to 396 (IYLDFFYSALVEFPAAFIIIL) form a helical membrane-spanning segment. Topologically, residues 397 to 404 (TIDRVGRR) are cytoplasmic. The chain crosses the membrane as a helical span at residues 405 to 425 (YPWAVSNMVAGAACLASVFIP). Residues 426–432 (DDLQWLK) lie on the Extracellular side of the membrane. The helical transmembrane segment at 433 to 453 (ITIACLGRMGITMAYEMVCLV) threads the bilayer. Topologically, residues 454-464 (NAELYPTYIRN) are cytoplasmic. A helical transmembrane segment spans residues 465–485 (LGVLVCSSMCDIGGIITPFLV). Residues 486–494 (YRLTDIWME) are Extracellular-facing. A helical transmembrane segment spans residues 495–515 (FPLVVFAVVGLVAGALVLLLP). Residues 516–555 (ETKGKALPETIEDAENMQRPRKKKEKRIYLQVKQADRPLS) lie on the Cytoplasmic side of the membrane.

Belongs to the major facilitator (TC 2.A.1) superfamily. Organic cation transporter (TC 2.A.1.19) family. Tyrosine phosphorylated. Expressed in the kidney, in the proximal tubules of cortex and of the outer medulla. In brain, highly expressed predominantly in regions located at the brain-cerebrospinal fluid border, in the leptomeninges, in the choroid plexus and in a layer boarding the third ventricle. In brain, also observed in the granular cell layer of the cerebellum and in the granular layer and pyramidal cells of the hippocampus in the CA1-CA3 regions. Expressed in tracheal and bronchial ciliated epithelium in the respiratory tract. Expression is greater in the kidney of male than of female.

It localises to the basolateral cell membrane. The protein localises to the basal cell membrane. Its subcellular location is the apical cell membrane. It carries out the reaction (R)-noradrenaline(out) = (R)-noradrenaline(in). It catalyses the reaction (R)-adrenaline(out) = (R)-adrenaline(in). The enzyme catalyses serotonin(out) = serotonin(in). The catalysed reaction is dopamine(out) = dopamine(in). It carries out the reaction histamine(out) = histamine(in). It catalyses the reaction thiamine(in) = thiamine(out). The enzyme catalyses creatinine(in) = creatinine(out). The catalysed reaction is 1-methylnicotinamide(out) = 1-methylnicotinamide(in). It carries out the reaction guanidine(out) = guanidine(in). It catalyses the reaction choline(out) = choline(in). The enzyme catalyses agmatine(out) = agmatine(in). The catalysed reaction is putrescine(out) = putrescine(in). It carries out the reaction spermidine(in) = spermidine(out). It catalyses the reaction tyramine(in) = tyramine(out). The enzyme catalyses L-histidyl-L-proline diketopiperazine(in) = L-histidyl-L-proline diketopiperazine(out). The catalysed reaction is (R)-salsolinol(in) = (R)-salsolinol(out). It carries out the reaction N-methyl-(R)-salsolinol(in) = N-methyl-(R)-salsolinol(out). It catalyses the reaction acetylcholine(in) = acetylcholine(out). The enzyme catalyses prostaglandin F2alpha(out) = prostaglandin F2alpha(in). The catalysed reaction is prostaglandin E2(out) = prostaglandin E2(in). Its activity is regulated as follows. Tyrosine phosphorylation of the transporter leads to activation of the transport activity. Inhibited by cGMP, most likely through a cGMP-binding protein that interacts with OCT2. In terms of biological role, electrogenic voltage-dependent transporter that mediates the transport of a variety of organic cations such as endogenous bioactive amines, cationic drugs and xenobiotics. Functions as a Na(+)-independent, bidirectional uniporter. Cation cellular uptake or release is driven by the electrochemical potential, i.e. membrane potential and concentration gradient. However, may also engage electroneutral cation exchange when saturating concentrations of cation substrates are reached. Predominantly expressed at the basolateral membrane of hepatocytes and proximal tubules and involved in the uptake and disposition of cationic compounds by hepatic and renal clearance from the blood flow. Implicated in monoamine neurotransmitters uptake such as histamine, dopamine, adrenaline/epinephrine, noradrenaline/norepinephrine, serotonin and tyramine, thereby supporting a physiological role in the central nervous system by regulating interstitial concentrations of neurotransmitters. Also capable of transporting dopaminergic neuromodulators cyclo(his-pro), salsolinol and N-methyl-salsolinol, thereby involved in the maintenance of dopaminergic cell integrity in the central nervous system. Mediates the bidirectional transport of acetylcholine (ACh) at the apical membrane of ciliated cell in airway epithelium, thereby playing a role in luminal release of ACh from bronchial epithelium. Also transports guanidine and endogenous monoamines such as vitamin B1/thiamine, creatinine and N-1-methylnicotinamide (NMN). Mediates the uptake and efflux of quaternary ammonium compound choline. Mediates the bidirectional transport of polyamine agmatine and the uptake of polyamine putrescine. Able to transport non-amine endogenous compounds such as prostaglandin E2 (PGE2) and prostaglandin F2-alpha (PGF2-alpha). Also involved in the uptake of xenobiotic 4-(4-(dimethylamino)styryl)-N-methylpyridinium (ASP). May contribute to regulate the transport of organic compounds in testis across the blood-testis-barrier. The polypeptide is Solute carrier family 22 member 2 (Rattus norvegicus (Rat)).